A 188-amino-acid chain; its full sequence is uncharacterized protein (188 aa).

The next 3 membrane-spanning stretches (helical) occupy residues 6 to 26, 43 to 63, and 110 to 130; these read MIVFMLLMVEIVSFVILSLPL, FAGRVKHVLKITIICILILFA, and ALFLSLVVNRYYLALEAMIAA.

It is found in the membrane. This is an uncharacterized protein from Schizosaccharomyces pombe (strain 972 / ATCC 24843) (Fission yeast).